Here is a 1067-residue protein sequence, read N- to C-terminus: Lon protease homolog, mitochondrial (1067 aa).

A mitochondrion-targeting transit peptide spans 1–36 (MITRLSGACLRRSGAKRNWPREHLVHRSLLASFSTT). Residues 55–82 (KSKEPKDNKPLDNKNDPKKTHNEDESHT) show a composition bias toward basic and acidic residues. 2 disordered regions span residues 55-142 (KSKE…MPLN) and 262-314 (IPPK…ESTP). The segment covering 128 to 139 (FELGGEENEDEM) has biased composition (acidic residues). The Lon N-terminal domain occupies 162–425 (LLALPIARRP…KALYVLKKEL (264 aa)). Over residues 293–311 (VKSDLKQDNGKEEPEKEVE) the composition is skewed to basic and acidic residues. 578-585 (GPPGVGKT) contributes to the ATP binding site. The segment at 791–820 (NSKEKSTGKSGKKTSPQSSEDAANKEASSV) is disordered. A Lon proteolytic domain is found at 854 to 1040 (TTPPGVVMGL…DDVFKRVFSN (187 aa)). Residues serine 946 and lysine 989 contribute to the active site.

It belongs to the peptidase S16 family. In terms of assembly, homohexamer or homoheptamer. Organized in a ring with a central cavity.

The protein localises to the mitochondrion matrix. The enzyme catalyses Hydrolysis of proteins in presence of ATP.. ATP-dependent serine protease that mediates the selective degradation of misfolded, unassembled or oxidatively damaged polypeptides as well as certain short-lived regulatory proteins in the mitochondrial matrix. May also have a chaperone function in the assembly of inner membrane protein complexes. Participates in the regulation of mitochondrial gene expression and in the maintenance of the integrity of the mitochondrial genome. Binds to mitochondrial DNA in a site-specific manner. This is Lon protease homolog, mitochondrial (pim1) from Schizosaccharomyces pombe (strain 972 / ATCC 24843) (Fission yeast).